A 1213-amino-acid chain; its full sequence is Chitin synthase 3 (1213 aa).

Positions M1–D97 are disordered. At M1–K168 the chain is on the cytoplasmic side. Basic and acidic residues predominate over residues I32–P44. A compositionally biased stretch (polar residues) spans E75–A87. The chain crosses the membrane as a helical span at residues V169–P189. Residues T190–K200 are Extracellular-facing. The helical transmembrane segment at I201–F221 threads the bilayer. Over T222–K450 the chain is Cytoplasmic. Residues V451–A471 form a helical membrane-spanning segment. Over C472–E1016 the chain is Extracellular. Residues N588 and N1008 are each glycosylated (N-linked (GlcNAc...) asparagine). The chain crosses the membrane as a helical span at residues L1017–I1037. Residues E1038–L1039 lie on the Cytoplasmic side of the membrane. Residues I1040–I1060 form a helical membrane-spanning segment. At V1061–T1065 the chain is on the extracellular side. Residues P1066–I1086 form a helical membrane-spanning segment. The Cytoplasmic segment spans residues T1087 to S1213. Positions E1161–S1213 are disordered.

The protein belongs to the chitin synthase family. Class IV subfamily.

Its subcellular location is the cell membrane. It carries out the reaction [(1-&gt;4)-N-acetyl-beta-D-glucosaminyl](n) + UDP-N-acetyl-alpha-D-glucosamine = [(1-&gt;4)-N-acetyl-beta-D-glucosaminyl](n+1) + UDP + H(+). Its function is as follows. Polymerizes chitin, a structural polymer of the cell wall and septum, by transferring the sugar moiety of UDP-GlcNAc to the non-reducing end of the growing chitin polymer. The protein is Chitin synthase 3 (CHS3) of Candida albicans (Yeast).